We begin with the raw amino-acid sequence, 37 residues long: Large ribosomal subunit protein bL36 (37 aa).

It belongs to the bacterial ribosomal protein bL36 family.

The polypeptide is Large ribosomal subunit protein bL36 (Mycoplasma genitalium (strain ATCC 33530 / DSM 19775 / NCTC 10195 / G37) (Mycoplasmoides genitalium)).